A 315-amino-acid chain; its full sequence is Cytochrome c biogenesis protein CcsA (315 aa).

The next 7 membrane-spanning stretches (helical) occupy residues 14–34 (VVSL…ISFW), 72–92 (ISNL…AQLF), 101–121 (IVSA…SFVL), 146–166 (VIMC…GVFL), 221–241 (SITA…VWAN), 255–272 (TWAL…HTRL), and 282–302 (AILA…VNLL).

This sequence belongs to the CcmF/CycK/Ccl1/NrfE/CcsA family. May interact with ccs1.

Its subcellular location is the cellular thylakoid membrane. Required during biogenesis of c-type cytochromes (cytochrome c6 and cytochrome f) at the step of heme attachment. The protein is Cytochrome c biogenesis protein CcsA of Prochlorococcus marinus (strain NATL1A).